A 987-amino-acid chain; its full sequence is Pentatricopeptide repeat-containing protein At1g06710, mitochondrial (987 aa).

Residues 1–42 (MNKTVVRCLLSRSHHPLIHFSTNLSLLHRVFTCSRYLTARFM) constitute a mitochondrion transit peptide. 22 PPR repeats span residues 164–198 (TAPVYNALVDLIVRDDDEKVPEEFLQQIRDDDKEV), 199–233 (FGEFLNVLVRKHCRNGSFSIALEELGRLKDFRFRP), 234–268 (SRSTYNCLIQAFLKADRLDSASLIHREMSLANLRM), 269–299 (DGFTLRCFAYSLCKVGKWREALTLVETENFV), 301–335 (DTVFYTKLISGLCEASLFEEAMDFLNRMRATSCLP), 336–370 (NVVTYSTLLCGCLNKKQLGRCKRVLNMMMMEGCYP), 371–405 (SPKIFNSLVHAYCTSGDHSYAYKLLKKMVKCGHMP), 406–446 (GYVV…GVVL), 447–481 (NKINVSSFTRCLCSAGKYEKAFSVIREMIGQGFIP), 482–516 (DTSTYSKVLNYLCNASKMELAFLLFEEMKRGGLVA), 517–551 (DVYTYTIMVDSFCKAGLIEQARKWFNEMREVGCTP), 552–586 (NVVTYTALIHAYLKAKKVSYANELFETMLSEGCLP), 587–621 (NIVTYSALIDGHCKAGQVEKACQIFERMCGSKDVP), 638–672 (NVVTYGALLDGFCKSHRVEEARKLLDAMSMEGCEP), 673–707 (NQIVYDALIDGLCKVGKLDEAQEVKTEMSEHGFPA), 708–742 (TLYTYSSLIDRYFKVKRQDLASKVLSKMLENSCAP), 743–777 (NVVIYTEMIDGLCKVGKTDEAYKLMQMMEEKGCQP), 778–812 (NVVTYTAMIDGFGMIGKIETCLELLERMGSKGVAP), 813–847 (NYVTYRVLIDHCCKNGALDVAHNLLEEMKQTHWPT), 881–915 (FLSVYRLLIDNLIKAQRLEMALRLLEEVATFSATL), 918–952 (YSSTYNSLIESLCLANKVETAFQLFSEMTKKGVIP), and 953–987 (EMQSFCSLIKGLFRNSKISEALLLLDFISHMVCPL).

Belongs to the PPR family. P subfamily.

Its subcellular location is the mitochondrion. The polypeptide is Pentatricopeptide repeat-containing protein At1g06710, mitochondrial (Arabidopsis thaliana (Mouse-ear cress)).